An 805-amino-acid chain; its full sequence is U-box domain-containing protein 70 (805 aa).

7 TPR repeats span residues 15-48 (ARRE…DPRD), 49-82 (ISFL…GREL), 90-127 (ARAL…HYSE), 129-153 (TLAK…DQEA), 154-187 (ADHH…NPKD), 189-221 (RVFS…DPTF), and 222-255 (LKGY…DPNN). The tract at residues 136-160 (AEEARKEIEERERLDQEAADHHRDR) is disordered. Positions 341–417 (RKETEESLSR…VREVEELRQK (77 aa)) form a coiled coil. Positions 445-711 (FSNSLKIGEG…GEVWAIVEAI (267 aa)) constitute a Protein kinase domain. ATP contacts are provided by residues 451–459 (IGEGGFGCV) and K472. D567 functions as the Proton acceptor in the catalytic mechanism. The 75-residue stretch at 730–804 (SPPSYFICPI…QEWLQQHSMS (75 aa)) folds into the U-box domain.

The protein belongs to the protein kinase superfamily. Ser/Thr protein kinase family. Interacts with MODD.

It carries out the reaction L-seryl-[protein] + ATP = O-phospho-L-seryl-[protein] + ADP + H(+). The catalysed reaction is L-threonyl-[protein] + ATP = O-phospho-L-threonyl-[protein] + ADP + H(+). The enzyme catalyses S-ubiquitinyl-[E2 ubiquitin-conjugating enzyme]-L-cysteine + [acceptor protein]-L-lysine = [E2 ubiquitin-conjugating enzyme]-L-cysteine + N(6)-ubiquitinyl-[acceptor protein]-L-lysine.. It participates in protein modification; protein ubiquitination. In terms of biological role, functions as an E3 ubiquitin ligase. Is recruited by MODD to promote ubiquitination of BZIP46, a positive regulator of abscisic acid (ABA) signaling and drought stress tolerance. The polypeptide is U-box domain-containing protein 70 (Oryza sativa subsp. japonica (Rice)).